We begin with the raw amino-acid sequence, 249 residues long: tRNA (guanine-N(1)-)-methyltransferase (249 aa).

S-adenosyl-L-methionine is bound by residues Gly113 and 132 to 137 (VGDFVV).

Belongs to the RNA methyltransferase TrmD family. Homodimer.

Its subcellular location is the cytoplasm. The catalysed reaction is guanosine(37) in tRNA + S-adenosyl-L-methionine = N(1)-methylguanosine(37) in tRNA + S-adenosyl-L-homocysteine + H(+). In terms of biological role, specifically methylates guanosine-37 in various tRNAs. The chain is tRNA (guanine-N(1)-)-methyltransferase from Desulforudis audaxviator (strain MP104C).